The chain runs to 1338 residues: Insulin receptor substrate 2 (1338 aa).

A compositionally biased stretch (pro residues) spans 1 to 12 (MASPPRHGPPGP). Disordered regions lie at residues 1 to 31 (MASP…NHSV) and 49 to 72 (VLRG…QPPR). Positions 16–144 (DGPNLNNNNN…WYRALTDLVS (129 aa)) constitute a PH domain. Residues 19–28 (NLNNNNNNNN) show a composition bias toward low complexity. The segment covering 53–66 (PGAGGDEATAGGGS) has biased composition (gly residues). The IRS-type PTB domain occupies 194-298 (YREVWQVNLK…EAMKALKELF (105 aa)). A disordered region spans residues 303–411 (RSKSQSSGSS…SHTLSGGCGG (109 aa)). Serine 306 and serine 346 each carry phosphoserine. Threonine 350 is modified (phosphothreonine). A phosphoserine mark is found at serine 365, serine 384, serine 388, and serine 391. An Omega-N-methylarginine modification is found at arginine 412. The interval 428–537 (SRSMSMPVAH…PPARDGGGGG (110 aa)) is disordered. The span at 444 to 453 (SPGSLSSSSG) shows a compositional bias: low complexity. A compositionally biased stretch (pro residues) spans 459–471 (YPPPPGPHPPLPH). Positions 475 to 493 (HGPGQRPSSGSASASGSPS) are enriched in low complexity. Phosphothreonine is present on threonine 520. At serine 523 the chain carries Phosphoserine. At threonine 527 the chain carries Phosphothreonine. A Phosphotyrosine; by INSR modification is found at tyrosine 540. Positions 540–543 (YGYM) match the YXXM motif 1 motif. Position 560 is a phosphoserine; by PLK1 (serine 560). Serine 577 carries the post-translational modification Phosphoserine. Phosphothreonine is present on residues threonine 579 and threonine 580. Serine 594 bears the Phosphoserine mark. A YXXM motif 2 motif is present at residues 598-601 (YTLM). Phosphoserine occurs at positions 608 and 620. A phosphotyrosine; by INSR mark is found at tyrosine 653 and tyrosine 675. 2 consecutive short sequence motifs (YXXM motif) follow at residues 653–656 (YMPM) and 675–678 (YMPM). 2 positions are modified to phosphoserine: serine 679 and serine 682. Low complexity predominate over residues 703–719 (PSAGPAGPAPTSAAGRT). Residues 703-739 (PSAGPAGPAPTSAAGRTFPASGGGYKASSPAESSPED) are disordered. 2 positions are modified to phosphoserine: serine 735 and serine 736. A YXXM motif 5 motif is present at residues 742-745 (YMRM). Serine 770 carries the phosphoserine modification. Threonine 779 carries the post-translational modification Phosphothreonine. Serine 805 carries the post-translational modification Phosphoserine. The short motif at 823 to 826 (YVLM) is the YXXM motif 6 element. Residue serine 828 is modified to Phosphoserine. The disordered stretch occupies residues 840–1101 (EPQATPGPSQ…KPEAARVASP (262 aa)). Over residues 859–870 (TQPPHPVVPSPV) the composition is skewed to pro residues. Serine 915 bears the Phosphoserine mark. Phosphotyrosine; by INSR is present on tyrosine 919. Positions 938–967 (LLASAASSSSLLSASSPASSLGSGTPGTSS) are enriched in low complexity. Position 973 is a phosphoserine (serine 973). A Phosphotyrosine; by INSR modification is found at tyrosine 978. Over residues 1013–1022 (PYPPLPPRPS) the composition is skewed to pro residues. The short motif at 1072–1075 (YTEM) is the YXXM motif 7 element. A Phosphothreonine modification is found at threonine 1082. Residues 1083–1093 (PPQPIAAPPKP) show a composition bias toward pro residues. The residue at position 1100 (serine 1100) is a Phosphoserine. Serine 1109 is subject to Phosphoserine; by PLK1. The tract at residues 1121–1296 (LQASQPPDPH…TRSLGGLISA (176 aa)) is disordered. Residues 1150-1165 (ETFSSTTTVTPVSPSF) are compositionally biased toward low complexity. Position 1159 is a phosphothreonine (threonine 1159). A phosphoserine mark is found at serine 1162, serine 1174, serine 1176, and serine 1186. The span at 1174 to 1183 (SASVENVSLR) shows a compositional bias: polar residues. Gly residues predominate over residues 1188–1198 (GGVGVGPGGGD). Serine 1203 carries the phosphoserine modification. Over residues 1224–1236 (QPGGLVGCPGSGG) the composition is skewed to gly residues. Tyrosine 1253 is modified (phosphotyrosine; by INSR). Residues 1263-1277 (GLPPQPQPPPPPLPQ) show a composition bias toward pro residues. Residue lysine 1331 forms a Glycyl lysine isopeptide (Lys-Gly) (interchain with G-Cter in ubiquitin) linkage.

In terms of assembly, interacts with PHIP. Interacts with SH2B1; this interaction enhances leptin-induced activation of the PI3-kinase pathway. Interacts with GRB2. Interacts with PIK3R1. Interacts with DVL2; this interaction promotes the Wnt/beta-catenin signaling pathway. In terms of processing, phosphorylation fluctuates in a cell-cycle dependent manner with hyperphosphorylation during mitosis. Phosphorylated at Ser-560 and Ser-1109 by PLK1; these phosphorylations prevent the activation of the PI3K pathway upon growth factor stimulation by inhibiting the binding between IRS2 and the PI3K pathway components and increasing the level of IRS2 protein degradation. In addition, they prevent premature mitotic exit. Post-translationally, monoubiquitinated by NEDD4; leading to enhanced IGF1 signaling. During cell cycle, ubiquitination and proteasomal degradation are controlled by FZR1.

It localises to the cytoplasm. Its subcellular location is the cytosol. Functionally, signaling adapter protein that participates in the signal transduction from two prominent receptor tyrosine kinases, insulin receptor/INSR and insulin-like growth factor I receptor/IGF1R. Plays therefore an important role in development, growth, glucose homeostasis as well as lipid metabolism. Upon phosphorylation by the insulin receptor, functions as a signaling scaffold that propagates insulin action through binding to SH2 domain-containing proteins including the p85 regulatory subunit of PI3K, NCK1, NCK2, GRB2 or SHP2. Recruitment of GRB2 leads to the activation of the guanine nucleotide exchange factor SOS1 which in turn triggers the Ras/Raf/MEK/MAPK signaling cascade. Activation of the PI3K/AKT pathway is responsible for most of insulin metabolic effects in the cell, and the Ras/Raf/MEK/MAPK is involved in the regulation of gene expression and in cooperation with the PI3K pathway regulates cell growth and differentiation. Acts a positive regulator of the Wnt/beta-catenin signaling pathway through suppression of DVL2 autophagy-mediated degradation leading to cell proliferation. Plays a role in cell cycle progression by promoting a robust spindle assembly checkpoint (SAC) during M-phase. In macrophages, IL4-induced tyrosine phosphorylation of IRS2 leads to the recruitment and activation of phosphoinositide 3-kinase (PI3K). In Homo sapiens (Human), this protein is Insulin receptor substrate 2 (IRS2).